Reading from the N-terminus, the 663-residue chain is UvrABC system protein B (663 aa).

Basic and acidic residues predominate over residues 1-10; it reads MIDKRDDKPF. The tract at residues 1 to 23 is disordered; the sequence is MIDKRDDKPFKLKSKYKPSGDQP. Residues 31–418 enclose the Helicase ATP-binding domain; that stretch reads DNIEGGEKAQ…TNTIIEQIIR (388 aa). 44–51 provides a ligand contact to ATP; the sequence is GATGTGKT. A Beta-hairpin motif is present at residues 97–120; the sequence is YYDYYQPEAYVPSSDTYIEKDSSV. One can recognise a Helicase C-terminal domain in the interval 435–597; the sequence is QMDDLLGEIN…IVPQTIKKDI (163 aa). Residues 627–662 form the UVR domain; sequence KEAINALQKQMQEAAELLDFELAAQMRDLILELKLM.

The protein belongs to the UvrB family. As to quaternary structure, forms a heterotetramer with UvrA during the search for lesions. Interacts with UvrC in an incision complex.

It localises to the cytoplasm. The UvrABC repair system catalyzes the recognition and processing of DNA lesions. A damage recognition complex composed of 2 UvrA and 2 UvrB subunits scans DNA for abnormalities. Upon binding of the UvrA(2)B(2) complex to a putative damaged site, the DNA wraps around one UvrB monomer. DNA wrap is dependent on ATP binding by UvrB and probably causes local melting of the DNA helix, facilitating insertion of UvrB beta-hairpin between the DNA strands. Then UvrB probes one DNA strand for the presence of a lesion. If a lesion is found the UvrA subunits dissociate and the UvrB-DNA preincision complex is formed. This complex is subsequently bound by UvrC and the second UvrB is released. If no lesion is found, the DNA wraps around the other UvrB subunit that will check the other stand for damage. The protein is UvrABC system protein B of Streptococcus pyogenes serotype M18 (strain MGAS8232).